We begin with the raw amino-acid sequence, 297 residues long: Hydroxysqualene synthase (297 aa).

This sequence belongs to the phytoene/squalene synthase family. HpnC subfamily.

The catalysed reaction is presqualene diphosphate + H2O = hydroxysqualene + diphosphate. It functions in the pathway secondary metabolite biosynthesis; hopanoid biosynthesis. Its function is as follows. Involved in the biosynthesis of the hopanoid precursor squalene (SQ) from farnesyl diphosphate (FPP). Catalyzes the second step, the conversion of presqualene diphosphate (PSPP) to hydroxysqualene (HSQ). This is Hydroxysqualene synthase from Zymomonas mobilis subsp. mobilis (strain ATCC 31821 / ZM4 / CP4).